A 335-amino-acid chain; its full sequence is tRNA pseudouridine synthase D (335 aa).

Catalysis depends on Asp77, which acts as the Nucleophile. The TRUD domain maps to Gly152–Pro308.

This sequence belongs to the pseudouridine synthase TruD family.

The catalysed reaction is uridine(13) in tRNA = pseudouridine(13) in tRNA. Responsible for synthesis of pseudouridine from uracil-13 in transfer RNAs. The chain is tRNA pseudouridine synthase D from Actinobacillus succinogenes (strain ATCC 55618 / DSM 22257 / CCUG 43843 / 130Z).